A 209-amino-acid polypeptide reads, in one-letter code: Abscisic acid receptor PYL5 (209 aa).

Residues 44–196 form an START-like region; it reads HAPGEHQCSS…NLTSLAEVSE (153 aa). C51 and C177 are oxidised to a cystine. Residues K80, 109-114, 136-142, and E161 each bind abscisate; these read ATTSTE and RLRNYSS. The short motif at 105–109 is the Gate loop element; the sequence is TGLPA. The short motif at 135–137 is the Latch loop element; that stretch reads HRL.

This sequence belongs to the PYR/PYL/RCAR abscisic acid intracellular receptor family. As to quaternary structure, monomer. Interacts with PP2C30. Binding to PP2C30 is dependent on the presence of abscisic acid (ABA). Interacts with PP2C51. Binding to PP2C51 is dependent on the presence of ABA. Interacts with PP2C50. Binding to PP2C50 is dependent on the presence of ABA. Interacts with PP2C53. In terms of tissue distribution, expressed in leaf sheaths and leaf blades. Expressed at low levels in roots, flowers and seeds.

It localises to the nucleus. Its subcellular location is the cytoplasm. The protein localises to the cytosol. Its function is as follows. Intracellular abscisic acid (ABA) receptor that functions as a positive regulator of ABA signaling pathway. Together with ABI5, PP2C30 and SAPK2, is part of an ABA signaling unit that modulates seed germination and early seedling growth. Acts as a positive regulator of abiotic stress-responsive gene expression. Inhibits the protein phosphatases PP2C06 and PP2C09 when activated by ABA. In Oryza sativa subsp. japonica (Rice), this protein is Abscisic acid receptor PYL5.